The chain runs to 610 residues: Estrogen receptor beta-2 (610 aa).

Residues 1–170 (MSSSTGPAPA…GILGKGDTHF (170 aa)) are modulating. NR C4-type zinc fingers lie at residues 171–191 (CAVCHDYASGYHYGVWSCEGC) and 207–231 (CPATNQCTIDKSRRKSCQACRLRKC). The segment at residues 171–236 (CAVCHDYASG…RLRKCYEVGM (66 aa)) is a DNA-binding region (nuclear receptor). Positions 302–538 (SPEQLVNCIL…DLLLEMLDAN (237 aa)) constitute an NR LBD domain. Positions 566–596 (HTSKQQPALKESNQDTRHSPQAEGTVDKTLH) are disordered. Basic and acidic residues predominate over residues 577–596 (SNQDTRHSPQAEGTVDKTLH).

It belongs to the nuclear hormone receptor family. NR3 subfamily. Binds DNA as a homodimer. Can form a heterodimer with ER-alpha. Predominantly expressed in pituitary, telencephalon and hypothalamus as well as in the liver.

Its subcellular location is the nucleus. Its function is as follows. Binds estrogens with an affinity similar to that of ER-alpha, and activates expression of reporter genes containing estrogen response elements (ERE) in an estrogen-dependent manner. The sequence is that of Estrogen receptor beta-2 (esr2b) from Carassius auratus (Goldfish).